The sequence spans 592 residues: Pyruvate decarboxylase 3 (592 aa).

Residues D54 and H141 each coordinate substrate. Residues 419 to 501 (DSWFNCQKLK…FLINNGGYTI (83 aa)) form a thiamine pyrophosphate binding region. Mg(2+) is bound by residues D469, N496, and G498. A substrate-binding site is contributed by E502.

Belongs to the TPP enzyme family. In terms of assembly, homotetramer. It depends on a metal cation as a cofactor. Requires thiamine diphosphate as cofactor. In terms of tissue distribution, expressed at low levels in roots and shoots.

It carries out the reaction a 2-oxocarboxylate + H(+) = an aldehyde + CO2. The chain is Pyruvate decarboxylase 3 (PDC3) from Arabidopsis thaliana (Mouse-ear cress).